Here is a 126-residue protein sequence, read N- to C-terminus: Nascent polypeptide-associated complex protein (126 aa).

In terms of domain architecture, NAC-A/B spans 10–77; sequence PRMMKQMQKM…AKKVAKAEEK (68 aa).

This sequence belongs to the NAC-alpha family. In terms of assembly, homodimer. Interacts with the ribosome. Binds ribosomal RNA.

Its function is as follows. Contacts the emerging nascent chain on the ribosome. The sequence is that of Nascent polypeptide-associated complex protein from Methanococcus maripaludis (strain C5 / ATCC BAA-1333).